The following is a 554-amino-acid chain: Muellerian-inhibiting factor (554 aa).

The N-terminal stretch at Met-1–Ala-24 is a signal peptide. The propeptide occupies Val-25–Arg-446. Asn-62, Asn-326, and Asn-410 each carry an N-linked (GlcNAc...) asparagine glycan. 3 cysteine pairs are disulfide-bonded: Cys-456/Cys-520, Cys-482/Cys-551, and Cys-486/Cys-553.

It belongs to the TGF-beta family. In terms of assembly, homodimer; disulfide-linked. In terms of processing, preproprotein is proteolytically processed to generate N- and C-terminal cleavage products that homodimerize and associate to form a biologically active non-covalent complex. Binding of the non-covalent complex to AMHRII induces dissociation of the pro-region from the mature C-terminal dimer. The N-terminal portion of the protein, despite having no intrinsic activity, has the role of amplifying the activity of the C-terminus. As to expression, expressed in Sertoli cells of fetal testes, and in testes just after birth, but absent in adult testes. In female, AMH is expressed after birth in the granulosa cells of the follicle.

Its subcellular location is the secreted. Plays an important role in several reproductive functions, including Muellerian duct regression during male fetal sexua,l differentiation and in the adult plays a role in Leydig cell differentiation and function. In female acts as a negative regulator of the primordial to primary follicle transition and decreases FSH sensitivity of growing follicles. Binds to its sole type II receptor, AMHR2 that recruits type I receptors ACVR1 and BMPR1A which subsequently activates the Smad pathway. This is Muellerian-inhibiting factor (Amh) from Mus musculus (Mouse).